We begin with the raw amino-acid sequence, 455 residues long: UDP-N-acetylmuramoylalanine--D-glutamate ligase (455 aa).

ATP is bound at residue 119–125 (GTNGKTT).

This sequence belongs to the MurCDEF family.

It localises to the cytoplasm. It carries out the reaction UDP-N-acetyl-alpha-D-muramoyl-L-alanine + D-glutamate + ATP = UDP-N-acetyl-alpha-D-muramoyl-L-alanyl-D-glutamate + ADP + phosphate + H(+). It functions in the pathway cell wall biogenesis; peptidoglycan biosynthesis. Cell wall formation. Catalyzes the addition of glutamate to the nucleotide precursor UDP-N-acetylmuramoyl-L-alanine (UMA). This Listeria innocua serovar 6a (strain ATCC BAA-680 / CLIP 11262) protein is UDP-N-acetylmuramoylalanine--D-glutamate ligase.